A 205-amino-acid chain; its full sequence is Ribosomal RNA small subunit methyltransferase G (205 aa).

S-adenosyl-L-methionine-binding positions include glycine 73, leucine 78, valine 124–glutamate 125, and arginine 139.

It belongs to the methyltransferase superfamily. RNA methyltransferase RsmG family.

Its subcellular location is the cytoplasm. The catalysed reaction is guanosine(527) in 16S rRNA + S-adenosyl-L-methionine = N(7)-methylguanosine(527) in 16S rRNA + S-adenosyl-L-homocysteine. In terms of biological role, specifically methylates the N7 position of guanine in position 527 of 16S rRNA. This Erwinia tasmaniensis (strain DSM 17950 / CFBP 7177 / CIP 109463 / NCPPB 4357 / Et1/99) protein is Ribosomal RNA small subunit methyltransferase G.